Here is a 302-residue protein sequence, read N- to C-terminus: Putative beta-glucosidase 17 (302 aa).

The first 27 residues, 1-27, serve as a signal peptide directing secretion; the sequence is MMAVAAATRIAVVVVAALAALAPGARG. A beta-D-glucoside-binding positions include Gln-47, His-149, and 194 to 195; that span reads NE. Catalysis depends on Glu-195, which acts as the Proton donor. The cysteines at positions 214 and 221 are disulfide-linked. Asn-274 carries N-linked (GlcNAc...) asparagine glycosylation.

Belongs to the glycosyl hydrolase 1 family.

It catalyses the reaction Hydrolysis of terminal, non-reducing beta-D-glucosyl residues with release of beta-D-glucose.. This Oryza sativa subsp. japonica (Rice) protein is Putative beta-glucosidase 17 (BGLU17).